The following is a 454-amino-acid chain: Alkaline extracellular protease (454 aa).

Residues 1-15 form the signal peptide; it reads MKLATAFTILTAVLA. The propeptide occupies 16 to 157; that stretch reads APLAAPAPAP…EIPASSNAKR (142 aa). In terms of domain architecture, Inhibitor I9 spans 68-146; the sequence is FIVVFDSSAT…TVEPDTIVSL (79 aa). N123 carries an N-linked (GlcNAc...) asparagine glycan. Residues 166 to 454 form the Peptidase S8 domain; the sequence is QWGLSRISHK…NAVAYNGVGI (289 aa). Active-site charge relay system residues include D200, H231, and S397.

This sequence belongs to the peptidase S8 family. Post-translationally, the pro-region is removed through cleavage by XPR6 after Lys156-Arg157, which yields mature active XPR2. The 10 consecutive -X-Ala- or -X-Pro- dipeptides located over 100 amino acids upstream of the N-terminal of mature XPR2 are subject to dipeptidyl aminopeptidase (DPAPase)-processing. DPAPase activity is not necessary for XPR6 cleavage and for secretion of mature active XPR2. In terms of processing, N-glycosylated. Glycosylation within the pro-region has no effect on secretion and maturation at 18 degrees Celsius, but is required for secretion at 28 degrees Celsius.

Its subcellular location is the secreted. The enzyme catalyses Hydrolysis of proteins with broad specificity for peptide bonds, and a preference for a large uncharged residue in P1. Hydrolyzes peptide amides.. Its activity is regulated as follows. The protease activity is completely inhibited by the serine inhibitor PMSF but is not affected by thiol group inhibitors and in the presence of dithiothreitol. In the presence of high concentrations of o-phenanthroline the protease activity is only partially inhibited. The pro-region plays an inhibitory role and may provide a mechanism for preventing premature activation in the secretory pathway. Functionally, major secreted protein that belongs to the subtilisin family serine proteases. This chain is Alkaline extracellular protease, found in Yarrowia lipolytica (strain CLIB 122 / E 150) (Yeast).